Here is a 290-residue protein sequence, read N- to C-terminus: Small ribosomal subunit biogenesis GTPase RsgA (290 aa).

Residues 62–213 (KNSLVRPPIV…IADTPGFSSL (152 aa)) form the CP-type G domain. GTP is bound by residues 111 to 114 (SKTD) and 156 to 164 (GQTGVGKTT). Zn(2+) contacts are provided by cysteine 237, cysteine 242, histidine 244, and cysteine 250.

The protein belongs to the TRAFAC class YlqF/YawG GTPase family. RsgA subfamily. As to quaternary structure, monomer. Associates with 30S ribosomal subunit, binds 16S rRNA. The cofactor is Zn(2+).

It localises to the cytoplasm. One of several proteins that assist in the late maturation steps of the functional core of the 30S ribosomal subunit. Helps release RbfA from mature subunits. May play a role in the assembly of ribosomal proteins into the subunit. Circularly permuted GTPase that catalyzes slow GTP hydrolysis, GTPase activity is stimulated by the 30S ribosomal subunit. In Streptococcus mutans serotype c (strain ATCC 700610 / UA159), this protein is Small ribosomal subunit biogenesis GTPase RsgA.